A 491-amino-acid chain; its full sequence is Probable glycine dehydrogenase (decarboxylating) subunit 2 (491 aa).

The residue at position 273 (Lys-273) is an N6-(pyridoxal phosphate)lysine.

This sequence belongs to the GcvP family. C-terminal subunit subfamily. As to quaternary structure, the glycine cleavage system is composed of four proteins: P, T, L and H. In this organism, the P 'protein' is a heterodimer of two subunits. It depends on pyridoxal 5'-phosphate as a cofactor.

The catalysed reaction is N(6)-[(R)-lipoyl]-L-lysyl-[glycine-cleavage complex H protein] + glycine + H(+) = N(6)-[(R)-S(8)-aminomethyldihydrolipoyl]-L-lysyl-[glycine-cleavage complex H protein] + CO2. In terms of biological role, the glycine cleavage system catalyzes the degradation of glycine. The P protein binds the alpha-amino group of glycine through its pyridoxal phosphate cofactor; CO(2) is released and the remaining methylamine moiety is then transferred to the lipoamide cofactor of the H protein. The polypeptide is Probable glycine dehydrogenase (decarboxylating) subunit 2 (Bacillus cereus (strain AH187)).